Consider the following 238-residue polypeptide: Zinc-finger homeodomain protein 11 (238 aa).

The ZF-HD dimerization-type; degenerate zinc-finger motif lies at 12-59; sequence YRECMRNHAAKLGTYANDGCCEYTPDDGHPAGLLCAACGCHRNFHRKD. Positions 119–188 form a DNA-binding region, homeobox; it reads RRRTRTKFTE…NHKAGGGGGG (70 aa). Over residues 183–200 the composition is skewed to gly residues; it reads GGGGGGGGSGGPGAGGGA. Residues 183 to 238 form a disordered region; that stretch reads GGGGGGGGSGGPGAGGGAQTSSSTTRGGGDVGVGLSPAMGGDGEDDEEVRGSEMCM.

Homo- and heterodimer with other ZFHD proteins.

It is found in the nucleus. Functionally, putative transcription factor. In Oryza sativa subsp. indica (Rice), this protein is Zinc-finger homeodomain protein 11 (ZHD11).